The primary structure comprises 272 residues: Hydroxyethylthiazole kinase (272 aa).

Residue Met-44 coordinates substrate. Residues Lys-119 and Thr-172 each coordinate ATP. Position 199 (Gly-199) interacts with substrate.

Belongs to the Thz kinase family. Mg(2+) serves as cofactor.

The catalysed reaction is 5-(2-hydroxyethyl)-4-methylthiazole + ATP = 4-methyl-5-(2-phosphooxyethyl)-thiazole + ADP + H(+). It participates in cofactor biosynthesis; thiamine diphosphate biosynthesis; 4-methyl-5-(2-phosphoethyl)-thiazole from 5-(2-hydroxyethyl)-4-methylthiazole: step 1/1. Functionally, catalyzes the phosphorylation of the hydroxyl group of 4-methyl-5-beta-hydroxyethylthiazole (THZ). The chain is Hydroxyethylthiazole kinase from Enterococcus faecalis (strain ATCC 700802 / V583).